A 351-amino-acid chain; its full sequence is DNA polymerase IV (351 aa).

The UmuC domain maps to 4 to 185 (IIHVDMDCFF…LPLAKIPGVG (182 aa)). 2 residues coordinate Mg(2+): D8 and D103. E104 is an active-site residue.

The protein belongs to the DNA polymerase type-Y family. As to quaternary structure, monomer. Requires Mg(2+) as cofactor.

It localises to the cytoplasm. It carries out the reaction DNA(n) + a 2'-deoxyribonucleoside 5'-triphosphate = DNA(n+1) + diphosphate. Poorly processive, error-prone DNA polymerase involved in untargeted mutagenesis. Copies undamaged DNA at stalled replication forks, which arise in vivo from mismatched or misaligned primer ends. These misaligned primers can be extended by PolIV. Exhibits no 3'-5' exonuclease (proofreading) activity. May be involved in translesional synthesis, in conjunction with the beta clamp from PolIII. The chain is DNA polymerase IV from Salmonella paratyphi B (strain ATCC BAA-1250 / SPB7).